The sequence spans 505 residues: RNA-splicing ligase RtcB homolog (505 aa).

Mn(2+)-binding residues include Asp119, Cys122, His227, His259, and His353. Asn226–Glu230 contributes to the GMP binding site. Residues His353–Asn354, Gly402–Met405, Ser409, His428–Gly431, and Lys504 each bind GMP. His428 acts as the GMP-histidine intermediate in catalysis.

It belongs to the RtcB family. As to quaternary structure, catalytic component of the tRNA-splicing ligase complex. Requires Mn(2+) as cofactor.

It localises to the nucleus. It is found in the cytoplasm. It catalyses the reaction a 3'-end 3'-phospho-ribonucleotide-RNA + a 5'-end dephospho-ribonucleoside-RNA + GTP = a ribonucleotidyl-ribonucleotide-RNA + GMP + diphosphate. The catalysed reaction is a 3'-end 2',3'-cyclophospho-ribonucleotide-RNA + a 5'-end dephospho-ribonucleoside-RNA + GTP + H2O = a ribonucleotidyl-ribonucleotide-RNA + GMP + diphosphate + H(+). Functionally, catalytic subunit of the tRNA-splicing ligase complex that acts by directly joining spliced tRNA halves to mature-sized tRNAs. Required for the ligation of mRNAs and specifically, regulates xbp-1 mRNA splicing during the endoplasmic reticulum stress-induced unfolded protein response. Has a neuroprotective role in the age-dependent degeneration of dopamine neurons, which is mediated by xbp-1. This chain is RNA-splicing ligase RtcB homolog, found in Caenorhabditis elegans.